The chain runs to 267 residues: Putative transcription factor Ovo-like 1 (267 aa).

4 C2H2-type zinc fingers span residues 118 to 140, 146 to 168, 174 to 197, and 213 to 236; these read FTCH…MKCH, HLCT…VRTH, YKCS…KKIH, and YVCE…KERH.

As to expression, expressed in skin, testis, kidney and weakly in lung. Not detected in heart, brain, spleen, liver and skeletal muscle.

Its subcellular location is the nucleus. Its function is as follows. Putative transcription factor. Involved in hair formation and spermatogenesis. May function in the differentiation and/or maintenance of the urogenital system. The protein is Putative transcription factor Ovo-like 1 (Ovol1) of Mus musculus (Mouse).